Reading from the N-terminus, the 869-residue chain is MSSSSTSIMDNLFQRSLEDLIKGFRLQLLGESNFISRAVEEIRREIKATDLSTKSTALHKLSYLAALHGVDMSWAAFHAVEVVSSSRFQHKRIGYQAITQSFNDQTSVMLLITNQVRKDLNSANEYEVSLALECLSRIGTHDLARDLTPEVFTLLGSSKSFVKKKAIGVVLRVFEKYHDAVKVCFKRLVENLETSDPQILSAVVGVFCELATKDPQSCLPLAPEFYKVLVDSRNNWVLIKVLKIFAKLALIEPRLGKKVAEPICEHMRRTVAKSLVFECVRTVVSSLSDNEAAVKLAVAKIREFLVEDDPNLKYLGLNALSIVAPKHLWAVLENKEVVVKAMSDEDPNVKLEALHLLMAMVNEDNVSEISRILMNYALKSDPLFCNEIIFSVLSACSRNAYEIIVDFDWYLSLLGEMARIPHCQRGEDIEHQLIDIGMRVRDARPQLVRVSWALLIDPALLGNLFLHPILSAAAWVSGEYVEFSKNPYETVEALLQPRTDLLPPSIKAIYIHSAFKVLVFCLGSYFSSQEPTSSSLAQESSSGSLLVNVFTHESILSLVNVIELGLGPLSGYHDVEVQERAKNVLGYISVIKQEIAEQLNLQDNETEASRVTAFMEDVFSEEFGPISATAQEKVCVPDGLELKENLGDLEEICGEHLKPVESDSVSYTDKISFSVSKLRIRDQQEATSSSSPPHEASSLLAEHRKRHGMYYLTSQKEDQDSNGTSSDYPLANELANEISQDSFNPKRKPNQSKPRPVVVKLDDGDESRITPQAKTNIQTANDDESLSRAIQSALLVKNKGKEKDRYEGNPNSGQQEKEESSRIENHQNSEKKKKKKKKKKGEGSSKHKSRRQNEVASASEQVIIPDFLL.

N-acetylserine is present on serine 2. HEAT repeat units follow at residues asparagine 33–valine 70, serine 107–aspartate 142, leucine 143–aspartate 179, alanine 180–glutamine 216, cysteine 218–arginine 254, alanine 292–tryptophan 329, and alanine 330–valine 366. The tract at residues isoleucine 738–leucine 869 is disordered. The span at isoleucine 769 to alanine 780 shows a compositional bias: polar residues. A compositionally biased stretch (basic and acidic residues) spans glutamine 815 to glutamate 830. Positions lysine 831–arginine 850 are enriched in basic residues.

Belongs to the adaptor complexes large subunit family. In terms of assembly, adaptor protein complex 3 (AP-3) is a heterotetramer composed of two large adaptins (delta-type subunit and beta-type subunit), a medium adaptin (mu-type subunit) and a small adaptin (sigma-type subunit). Binds to EPSIN2.

Its subcellular location is the cytoplasm. The protein localises to the golgi apparatus membrane. Functionally, part of the AP-3 complex, an adaptor-related complex which seems to be clathrin-associated. The complex is associated with the Golgi region as well as more peripheral structures. It facilitates the budding of vesicles from the Golgi membrane and may be directly involved in trafficking to the vacuole. It also function in maintaining the identity of lytic vacuoles and in regulating the transition between storage and lytic vacuoles. In Arabidopsis thaliana (Mouse-ear cress), this protein is AP-3 complex subunit delta (DELTA-ADR).